Here is a 354-residue protein sequence, read N- to C-terminus: Probable L-ascorbate-6-phosphate lactonase UlaG (354 aa).

Belongs to the UlaG family. A divalent metal cation is required as a cofactor.

Its subcellular location is the cytoplasm. The catalysed reaction is L-ascorbate 6-phosphate + H2O = 3-dehydro-L-gulonate 6-phosphate. Its pathway is cofactor degradation; L-ascorbate degradation; D-xylulose 5-phosphate from L-ascorbate: step 1/4. Its function is as follows. Probably catalyzes the hydrolysis of L-ascorbate-6-P into 3-keto-L-gulonate-6-P. Is essential for L-ascorbate utilization under anaerobic conditions. This is Probable L-ascorbate-6-phosphate lactonase UlaG from Escherichia fergusonii (strain ATCC 35469 / DSM 13698 / CCUG 18766 / IAM 14443 / JCM 21226 / LMG 7866 / NBRC 102419 / NCTC 12128 / CDC 0568-73).